The following is a 75-amino-acid chain: Large ribosomal subunit protein bL31 (75 aa).

The protein belongs to the bacterial ribosomal protein bL31 family. Type A subfamily. Part of the 50S ribosomal subunit.

In terms of biological role, binds the 23S rRNA. The protein is Large ribosomal subunit protein bL31 of Chlorobium luteolum (strain DSM 273 / BCRC 81028 / 2530) (Pelodictyon luteolum).